The primary structure comprises 232 residues: Large ribosomal subunit protein uL1 (232 aa).

The protein belongs to the universal ribosomal protein uL1 family. In terms of assembly, part of the 50S ribosomal subunit.

In terms of biological role, binds directly to 23S rRNA. The L1 stalk is quite mobile in the ribosome, and is involved in E site tRNA release. Its function is as follows. Protein L1 is also a translational repressor protein, it controls the translation of the L11 operon by binding to its mRNA. The sequence is that of Large ribosomal subunit protein uL1 from Variovorax paradoxus (strain S110).